A 446-amino-acid polypeptide reads, in one-letter code: Histone acetyltransferase type B subunit 2 (446 aa).

WD repeat units lie at residues 138–178 (DHPG…ITPS), 189–229 (GHKE…GTSK), 231–270 (LKYS…QIID), 286–326 (GHSD…SKVH), and 330–370 (GHQD…DEQT). Residues 372 to 376 (DDAED) are interaction with the histone H4 N-terminus. Residues 387-427 (GHTNHLADFSWNRNDPWLVCSAAEDNLLQIWKVANSIVSKE) form a WD 6 repeat. The disordered stretch occupies residues 427 to 446 (EPADMSTPELDDPKPKQSSH). Residues 437–446 (DDPKPKQSSH) show a composition bias toward basic and acidic residues.

The protein belongs to the WD repeat RBAP46/RBAP48/MSI1 family. As to quaternary structure, component of the HAT-B complex composed of at least hat-1 and hat-2. The HAT-B complex binds to histone H4 tail.

It localises to the cytoplasm. The protein localises to the nucleus. In terms of biological role, regulatory subunit of the histone acetylase B (HAT-B) complex. The complex acetylates 'Lys-12' of histone H4 which is required for telomeric silencing. This Neurospora crassa (strain ATCC 24698 / 74-OR23-1A / CBS 708.71 / DSM 1257 / FGSC 987) protein is Histone acetyltransferase type B subunit 2 (hat-2).